The chain runs to 104 residues: Large ribosomal subunit protein uL24 (104 aa).

This sequence belongs to the universal ribosomal protein uL24 family. As to quaternary structure, part of the 50S ribosomal subunit.

One of two assembly initiator proteins, it binds directly to the 5'-end of the 23S rRNA, where it nucleates assembly of the 50S subunit. In terms of biological role, one of the proteins that surrounds the polypeptide exit tunnel on the outside of the subunit. This Proteus mirabilis (strain HI4320) protein is Large ribosomal subunit protein uL24.